Here is a 546-residue protein sequence, read N- to C-terminus: CTP synthase (546 aa).

The amidoligase domain stretch occupies residues 1–266 (MTKYIFVTGG…GDYLVERLGL (266 aa)). Residue Ser13 participates in CTP binding. Position 13 (Ser13) interacts with UTP. ATP is bound at residue 14-19 (SVGKGI). Tyr54 lines the L-glutamine pocket. ATP is bound at residue Asp71. Asp71 and Glu141 together coordinate Mg(2+). Residues 148–150 (DIE), 187–192 (KTKPTQ), and Lys223 contribute to the CTP site. UTP-binding positions include 187 to 192 (KTKPTQ) and Lys223. The region spanning 291 to 533 (PIALVGKYVE…VAAAAQTLLA (243 aa)) is the Glutamine amidotransferase type-1 domain. Gly353 lines the L-glutamine pocket. Catalysis depends on Cys380, which acts as the Nucleophile; for glutamine hydrolysis. L-glutamine is bound by residues 381 to 384 (LGMQ), Glu404, and Arg461. Active-site residues include His506 and Glu508.

It belongs to the CTP synthase family. As to quaternary structure, homotetramer.

It carries out the reaction UTP + L-glutamine + ATP + H2O = CTP + L-glutamate + ADP + phosphate + 2 H(+). It catalyses the reaction L-glutamine + H2O = L-glutamate + NH4(+). The enzyme catalyses UTP + NH4(+) + ATP = CTP + ADP + phosphate + 2 H(+). The protein operates within pyrimidine metabolism; CTP biosynthesis via de novo pathway; CTP from UDP: step 2/2. With respect to regulation, allosterically activated by GTP, when glutamine is the substrate; GTP has no effect on the reaction when ammonia is the substrate. The allosteric effector GTP functions by stabilizing the protein conformation that binds the tetrahedral intermediate(s) formed during glutamine hydrolysis. Inhibited by the product CTP, via allosteric rather than competitive inhibition. Its function is as follows. Catalyzes the ATP-dependent amination of UTP to CTP with either L-glutamine or ammonia as the source of nitrogen. Regulates intracellular CTP levels through interactions with the four ribonucleotide triphosphates. The polypeptide is CTP synthase (Chloroflexus aurantiacus (strain ATCC 29366 / DSM 635 / J-10-fl)).